Reading from the N-terminus, the 371-residue chain is Chaperone protein DnaJ (371 aa).

In terms of domain architecture, J spans 5 to 70; that stretch reads DYYEVLGVNR…QKRAAYDQYG (66 aa). The tract at residues 31 to 52 is disordered; sequence KYHPDRNPDNPKAEESFKEAKE. Positions 32–52 are enriched in basic and acidic residues; the sequence is YHPDRNPDNPKAEESFKEAKE. Residues 132–210 form a CR-type zinc finger; sequence RTETKIRIPV…CQGAGRVKKH (79 aa). Residues C145, C148, C162, C165, C184, C187, C198, and C201 each contribute to the Zn(2+) site. 4 CXXCXGXG motif repeats span residues 145–152, 162–169, 184–191, and 198–205; these read CETCHGSG, CTTCGGHG, CPKCHGSG, and CPSCQGAG.

This sequence belongs to the DnaJ family. In terms of assembly, homodimer. Zn(2+) serves as cofactor.

It is found in the cytoplasm. In terms of biological role, participates actively in the response to hyperosmotic and heat shock by preventing the aggregation of stress-denatured proteins and by disaggregating proteins, also in an autonomous, DnaK-independent fashion. Unfolded proteins bind initially to DnaJ; upon interaction with the DnaJ-bound protein, DnaK hydrolyzes its bound ATP, resulting in the formation of a stable complex. GrpE releases ADP from DnaK; ATP binding to DnaK triggers the release of the substrate protein, thus completing the reaction cycle. Several rounds of ATP-dependent interactions between DnaJ, DnaK and GrpE are required for fully efficient folding. Also involved, together with DnaK and GrpE, in the DNA replication of plasmids through activation of initiation proteins. In Methylovorus sp. (strain SS1 / DSM 11726), this protein is Chaperone protein DnaJ.